The primary structure comprises 225 residues: Ribosome maturation factor RimM (225 aa).

One can recognise a PRC barrel domain in the interval alanine 144 to tyrosine 225.

It belongs to the RimM family. In terms of assembly, binds ribosomal protein uS19.

The protein resides in the cytoplasm. Its function is as follows. An accessory protein needed during the final step in the assembly of 30S ribosomal subunit, possibly for assembly of the head region. Essential for efficient processing of 16S rRNA. May be needed both before and after RbfA during the maturation of 16S rRNA. It has affinity for free ribosomal 30S subunits but not for 70S ribosomes. In Burkholderia orbicola (strain MC0-3), this protein is Ribosome maturation factor RimM.